Consider the following 50-residue polypeptide: Photosystem II reaction center protein M (50 aa).

The helical transmembrane segment at 7-27 (GFIASLLFVGVPTIFLIGLFI) threads the bilayer.

This sequence belongs to the PsbM family. PSII is composed of 1 copy each of membrane proteins PsbA, PsbB, PsbC, PsbD, PsbE, PsbF, PsbH, PsbI, PsbJ, PsbK, PsbL, PsbM, PsbT, PsbX, PsbY, Psb30/Ycf12, peripheral proteins PsbO, CyanoQ (PsbQ), PsbU, PsbV and a large number of cofactors. It forms dimeric complexes.

Its subcellular location is the cellular thylakoid membrane. One of the components of the core complex of photosystem II (PSII). PSII is a light-driven water:plastoquinone oxidoreductase that uses light energy to abstract electrons from H(2)O, generating O(2) and a proton gradient subsequently used for ATP formation. It consists of a core antenna complex that captures photons, and an electron transfer chain that converts photonic excitation into a charge separation. This subunit is found at the monomer-monomer interface. The chain is Photosystem II reaction center protein M from Prochlorococcus marinus (strain MIT 9312).